The following is a 22-amino-acid chain: Major outer membrane protein (22 aa).

Belongs to the Gram-negative porin family. In terms of assembly, disulfide bond interactions within and between MOMP molecules and other components form high molecular-weight oligomers.

The protein localises to the cell outer membrane. Structural rigidity of the outer membrane of elementary bodies and porin forming, permitting diffusion of solutes through the intracellular reticulate body membrane. This is Major outer membrane protein (ompH) from Avibacterium gallinarum (Pasteurella gallinarum).